Consider the following 776-residue polypeptide: General transcription and DNA repair factor IIH helicase subunit XPD (776 aa).

In terms of domain architecture, Helicase ATP-binding spans 7–277 (DLLVYFPYSY…KKVDEKRLKD (271 aa)). 42-49 (MPSGTGKT) serves as a coordination point for ATP. The [4Fe-4S] cluster site is built by Cys-115, Cys-133, Cys-150, and Cys-184. The DEAH box signature appears at 228-231 (DEAH). The interval 736 to 776 (HVEKQSTSKPPQQQNSAINSTITTSTTTTTTTSTISETHLT) is disordered. The span at 742–754 (TSKPPQQQNSAIN) shows a compositional bias: polar residues. Low complexity predominate over residues 755–776 (STITTSTTTTTTTSTISETHLT).

The protein belongs to the helicase family. RAD3/XPD subfamily. As to quaternary structure, component of the 7-subunit TFIIH core complex composed of XPB/repB, XPD/repD, gtf2h1, gtf2h2, gtf2h3, gtf2h4 and gtf2h5, which is active in NER. The core complex associates with the 3-subunit CDK-activating kinase (CAK) module composed of cycH/cyclin H, cdk7 and mnat1 to form the 10-subunit holoenzyme (holo-TFIIH) active in transcription. It depends on Mg(2+) as a cofactor. [4Fe-4S] cluster is required as a cofactor.

It localises to the nucleus. It catalyses the reaction Couples ATP hydrolysis with the unwinding of duplex DNA at the replication fork by translocating in the 5'-3' direction. This creates two antiparallel DNA single strands (ssDNA). The leading ssDNA polymer is the template for DNA polymerase III holoenzyme which synthesizes a continuous strand.. It carries out the reaction ATP + H2O = ADP + phosphate + H(+). ATP-dependent 5'-3' DNA helicase, component of the general transcription and DNA repair factor IIH (TFIIH) core complex, which is involved in general and transcription-coupled nucleotide excision repair (NER) of damaged DNA and, when complexed to CDK-activating kinase (CAK), in transcription by RNA polymerase II. In NER, TFIIH acts by opening DNA around the lesion to allow the excision of the damaged oligonucleotide and its replacement by a new DNA fragment. The ATP-dependent helicase activity of XPD/repD is required for DNA opening. In transcription, TFIIH has an essential role in transcription initiation. When the pre-initiation complex (PIC) has been established, TFIIH is required for promoter opening and promoter escape. Phosphorylation of the C-terminal tail (CTD) of the largest subunit of RNA polymerase II by the kinase module CAK controls the initiation of transcription. XPD/repD acts by forming a bridge between CAK and the core-TFIIH complex. The polypeptide is General transcription and DNA repair factor IIH helicase subunit XPD (Dictyostelium discoideum (Social amoeba)).